The following is a 317-amino-acid chain: Acetyl-coenzyme A carboxylase carboxyl transferase subunit alpha (317 aa).

A CoA carboxyltransferase C-terminal domain is found at 40–294; the sequence is RLQKKSEELT…KQQILADLQD (255 aa).

It belongs to the AccA family. In terms of assembly, acetyl-CoA carboxylase is a heterohexamer composed of biotin carboxyl carrier protein (AccB), biotin carboxylase (AccC) and two subunits each of ACCase subunit alpha (AccA) and ACCase subunit beta (AccD).

It localises to the cytoplasm. It carries out the reaction N(6)-carboxybiotinyl-L-lysyl-[protein] + acetyl-CoA = N(6)-biotinyl-L-lysyl-[protein] + malonyl-CoA. It participates in lipid metabolism; malonyl-CoA biosynthesis; malonyl-CoA from acetyl-CoA: step 1/1. Functionally, component of the acetyl coenzyme A carboxylase (ACC) complex. First, biotin carboxylase catalyzes the carboxylation of biotin on its carrier protein (BCCP) and then the CO(2) group is transferred by the carboxyltransferase to acetyl-CoA to form malonyl-CoA. The sequence is that of Acetyl-coenzyme A carboxylase carboxyl transferase subunit alpha from Actinobacillus pleuropneumoniae serotype 5b (strain L20).